An 857-amino-acid polypeptide reads, in one-letter code: Protein argonaute-1 (857 aa).

The PAZ domain maps to 227-346 (PVIEFMCEVL…LPLEVCNIVA (120 aa)). 2 interaction with guide RNA regions span residues 309 to 314 (YFKQKY) and 522 to 564 (GKTP…LCLK). Residues 515-816 (LIIVILPGKT…VAFRARYHLV (302 aa)) form the Piwi domain. The segment at 670-675 (PEGQLP) is impairs access of bound RNA to the active site. 3 interaction with guide RNA regions span residues 708-712 (RHHTR), 751-759 (HAGIQGTSR), and 788-813 (YVRC…RARY).

Belongs to the argonaute family. Ago subfamily. In terms of assembly, interacts with DDB1, DDX5, DDX6, DHX30, DHX36, DDX47, DICER1, AGO2, ELAVL1, HNRNPF, IGF2BP1, ILF3, IMP8, MATR3, MOV10, PABPC1, PRMT5, RBM4, SART3, TNRC6B, UPF1 and YBX1. Associates with polysomes and messenger ribonucleoproteins (mNRPs). Interacts with LIMD1, WTIP and AJUBA. Interacts with APOBEC3F, APOBEC3G and APOBEC3H. Post-translationally, ubiquitinated on surface-exposed lysines by a SCF-like E3 ubiquitin-protein ligase complex containing ZSWIM8 during target-directed microRNA degradation (TDMD), a process that mediates degradation of microRNAs (miRNAs). Ubiquitination by the SCF-like E3 ubiquitin-protein ligase complex containing ZSWIM8 leads to its subsequent degradation, thereby exposing miRNAs for degradation. ZSWIM8 recognizes and binds AGO1 when it is engaged with a TDMD target.

The protein localises to the cytoplasm. It localises to the P-body. Its function is as follows. Required for RNA-mediated gene silencing (RNAi). Binds to short RNAs such as microRNAs (miRNAs) or short interfering RNAs (siRNAs), and represses the translation of mRNAs which are complementary to them. Lacks endonuclease activity and does not appear to cleave target mRNAs. Also required for transcriptional gene silencing (TGS) of promoter regions which are complementary to bound short antigene RNAs (agRNAs). In Homo sapiens (Human), this protein is Protein argonaute-1 (AGO1).